The following is a 75-amino-acid chain: Phi-liotoxin-Lw1a (75 aa).

Positions 1–25 (MNFATKVSLLLLAIAVIVIVEGGEG) are cleaved as a signal peptide. Positions 26-39 (DSWFEEHEESDTER) are excised as a propeptide. Disulfide bonds link Cys-50/Cys-62 and Cys-56/Cys-68.

In terms of tissue distribution, expressed by the venom gland.

The protein resides in the secreted. Affects the activity of both ryanodine-sensitive calcium-release channels RyR1 and RyR2 with high potency. At lower concentrations the toxin increases full openings of the RyRs, and at higher concentrations it inhibits full openings and induce openings to subconductance levels and reduces the number of full conductance openings. The different actions may be attributed to the toxins binding at different sites on the RyRs, with binding at a high-affinity site mediating the increase in full openings and the induction of subconductance states evoked upon binding to a lower-affinity site. Insect-selective toxin that provokes a dose-dependent contractile paralysis in crickets and blowfly larvae, followed by death. The sequence is that of Phi-liotoxin-Lw1a from Hormurus waigiensis (Australian rainforest scorpion).